The primary structure comprises 511 residues: Maturase K (511 aa).

This sequence belongs to the intron maturase 2 family. MatK subfamily.

The protein resides in the plastid. The protein localises to the chloroplast. In terms of biological role, usually encoded in the trnK tRNA gene intron. Probably assists in splicing its own and other chloroplast group II introns. This is Maturase K from Maihuenia poeppigii (Hardy cactus).